Reading from the N-terminus, the 673-residue chain is MAQTGTDPQARIEALRREIREHDHRYYVLDAPVIADAEYDALMAELQALEAEHPELITPDSPSQRVAGRPAEGFGEVTHAEPMLSLDNAFEEADLAEFDRRVRQALGLDPVVYVAEPKLDGLSVSIRYEDGRLVRAGTRGDGRVGEAITENVRTIRSVPLRLRGEGWPPVMEVRGEVVIRRADFERLNEQRLADGERPFANPRNAAAGSLRQLDPRITARRRLTFFTFGVAAAGRLAASHHEVLDKLAGWGFRVNERVERVRGLDGCREYYQRLLADRDELSFEIDGVVYKVDDLDAREELGFTARAPRWAIAWKLPAQEATTVVRRILPSVGRTGAITPVAELEPVGVGGVTVSRATLHNLDEVRRKDVRKGDTVMVRRAGDVIPEITAVVTEKRPEGAEPWAMPAECPVCGSEVLRLDDEAVHRCMGGLYCPAQREGALLHFASRKALDIDGLGEKVVSQLVERGMVRSPADLFTLEHCQLAGLERMGDKSADNLVAALDKARRTTLPRFLYALGIQHVGEVTARRLAEHFGSLEAIMNADESALAETPDVGPVVAQAIAHFFAEPHNREVVQALRAAGVTWEEVDPAERGEQPLAGRTFVLTGTLSGMTRDEAKAALEALGARVSGSVSKKTDYLVAGEKAGSKLAKAESLGVEVLDEQALQALLQEHGR.

NAD(+)-binding positions include 36–40 (DAEYD), 85–86 (SL), and Glu116. The active-site N6-AMP-lysine intermediate is the Lys118. NAD(+)-binding residues include Arg139, Glu176, Lys291, and Lys315. Zn(2+)-binding residues include Cys409, Cys412, Cys427, and Cys433. The BRCT domain maps to 592–673 (RGEQPLAGRT…LQALLQEHGR (82 aa)).

This sequence belongs to the NAD-dependent DNA ligase family. LigA subfamily. It depends on Mg(2+) as a cofactor. Requires Mn(2+) as cofactor.

The catalysed reaction is NAD(+) + (deoxyribonucleotide)n-3'-hydroxyl + 5'-phospho-(deoxyribonucleotide)m = (deoxyribonucleotide)n+m + AMP + beta-nicotinamide D-nucleotide.. In terms of biological role, DNA ligase that catalyzes the formation of phosphodiester linkages between 5'-phosphoryl and 3'-hydroxyl groups in double-stranded DNA using NAD as a coenzyme and as the energy source for the reaction. It is essential for DNA replication and repair of damaged DNA. This chain is DNA ligase, found in Alkalilimnicola ehrlichii (strain ATCC BAA-1101 / DSM 17681 / MLHE-1).